The chain runs to 242 residues: Uridylate kinase (242 aa).

Position 17 to 20 (17 to 20 (KLSG)) interacts with ATP. Residue G59 participates in UMP binding. Residues G60 and R64 each contribute to the ATP site. UMP-binding positions include D79 and 140-147 (LGNPFFTT). ATP contacts are provided by T167, Y173, and D176.

The protein belongs to the UMP kinase family. In terms of assembly, homohexamer.

Its subcellular location is the cytoplasm. The enzyme catalyses UMP + ATP = UDP + ADP. The protein operates within pyrimidine metabolism; CTP biosynthesis via de novo pathway; UDP from UMP (UMPK route): step 1/1. Its activity is regulated as follows. Inhibited by UTP. In terms of biological role, catalyzes the reversible phosphorylation of UMP to UDP. The protein is Uridylate kinase of Buchnera aphidicola subsp. Baizongia pistaciae (strain Bp).